The following is a 508-amino-acid chain: Phenylalanine--tRNA ligase alpha subunit (508 aa).

Ala2 carries the post-translational modification N-acetylalanine. At Thr190 the chain carries Phosphothreonine. 2 positions are modified to phosphoserine: Ser193 and Ser301. Lys311 carries the post-translational modification N6-acetyllysine. L-phenylalanine is bound by residues Thr329, 372-374, and Tyr412; that span reads QIE. Mg(2+) is bound at residue Glu414. L-phenylalanine is bound at residue Phe438.

This sequence belongs to the class-II aminoacyl-tRNA synthetase family. Phe-tRNA synthetase alpha subunit type 2 subfamily. Heterotetramer; dimer of two heterodimers formed by FARSA and FARSB.

The protein localises to the cytoplasm. The catalysed reaction is tRNA(Phe) + L-phenylalanine + ATP = L-phenylalanyl-tRNA(Phe) + AMP + diphosphate + H(+). This is Phenylalanine--tRNA ligase alpha subunit (FARSA) from Homo sapiens (Human).